Here is a 273-residue protein sequence, read N- to C-terminus: MLHLLALALLLSLVSAAPAPGQALQRSGIIGGKEAPGSRWPWQVSLRVRDQYWRHQCGGSLIHPQWVLTAAHCIGPELQEPSDFRVQLREQHLYYQDRLLPISRVIPHPHYYMVENGADIALLQLEEPVSISRHVQPVTLPPASETFPPESQCWVTGWGDVDNGRPLPPPYPLKQVKVPIVENSVCDWKYHSGLSTDYSVPIVQEDNLCAGDGGRDSCQGDSGGPLVCKVNGTWLQAGVVSWGDGCAKPNRPGIYTRITSYLDWIHQYVPQEP.

A signal peptide spans 1–18; it reads MLHLLALALLLSLVSAAP. Residues 19–28 constitute a propeptide, activation peptide; the sequence is APGQALQRSG. Residues 29-270 enclose the Peptidase S1 domain; sequence IIGGKEAPGS…YLDWIHQYVP (242 aa). Cys-57 and Cys-73 are disulfide-bonded. Residues His-72 and Asp-119 each act as charge relay system in the active site. 3 disulfides stabilise this stretch: Cys-153/Cys-228, Cys-186/Cys-209, and Cys-218/Cys-246. Catalysis depends on Ser-222, which acts as the Charge relay system. Asn-231 carries an N-linked (GlcNAc...) asparagine glycan.

This sequence belongs to the peptidase S1 family. Tryptase subfamily. Homotetramer.

Its subcellular location is the secreted. It carries out the reaction Preferential cleavage: Arg-|-Xaa, Lys-|-Xaa, but with more restricted specificity than trypsin.. In terms of biological role, tryptase is the major neutral protease present in mast cells and is secreted upon the coupled activation-degranulation response of this cell type. This Ovis aries (Sheep) protein is Tryptase-2.